Reading from the N-terminus, the 144-residue chain is Large ribosomal subunit protein uL15 (144 aa).

A compositionally biased stretch (basic residues) spans 1 to 13 (MVRERTKKLRGGH). The tract at residues 1–32 (MVRERTKKLRGGHYGRGFKAGRGKGKKGGSGN) is disordered.

Belongs to the universal ribosomal protein uL15 family. In terms of assembly, part of the 50S ribosomal subunit.

Binds to the 23S rRNA. This chain is Large ribosomal subunit protein uL15, found in Thermoplasma acidophilum (strain ATCC 25905 / DSM 1728 / JCM 9062 / NBRC 15155 / AMRC-C165).